Here is a 968-residue protein sequence, read N- to C-terminus: MANRNLEKMASIDAQLRQLAPSKVSEDDKLIEYDALLLDRFLDILQNLHGEDLKETVQEVYELSAEYEGKHDPKKLEELGNVITSLDAGDSIVVAKSFSHMLNLANLAEEVQISRRRRNKLKKGDFADENNATTESDIEETLKKLVFELKKSPQEVFDALKNQTVDLVLTAHPTQSVRRSLLQKHARIRNCLSKLYAKDITPDDKQELDEALQREIQAAFRTDEIRRTPPTPQDEMRAGMSYFHETIWNGVPSFLRRVDTALNNIGIKERVPYNAPLIQFSSWMGGDRDGNPRVTPEVTRDVCLLARMMAANMYYSQIEDLMFELSMWRCNDELRVHADEVHRSSNKDEVAKHYIEFWKKVPTNEPYRVVLGEVRDRLYQTRERSRHLLSNGYSDIPEENTFTSVEEFLQPLELCYRSLCACGDRAIADGSLLDFLRQVSTFGLSIVRLDIRQESDRHTDVLDAITKHLEIGSYQEWSEEKRQEWLLSELSGKRPLFGPDLPQTEEIRDVLDTFHVIAELPPDNFGAYIISMATAPSDVLAVELLQRECHVKHPLRVVPLFEKLADLEAAPAALARLFSVDWYKNRIDGKQEVMIGYSDSGKDAGRFSAAWQLYKAQEELVKVAKKFGIKLTMFHGRGGTVGRGGGPTHLAILSQPPDTIHGSLRVTVQGEVIEQCFGEQHLCFRTLQRFTAATLEHGMNPPISPKPEWRAMMDQMAVIATEEYRSIVFKEPRFVEYFRLATPELEYGRMNIGSRPAKRRPSGGIETLRAIPWIFAWTQTRFHLPVWLGFGAAFKQVLDKNAKKNLSMLQEMYNQWPFFRVTLDLVEMVFAKGDPKIGALNDRLLVSKDLWPFGDQLRNKYEETKKLLLQVAGHKEILEGDPYLKQRLRLRHSPITTLNVFQAYTLKRIRDPNYKVKARPRISKESAEASKSADELIKLNPTSEYAPGLEDTLILTMKGIAAGMQNTG.

Serine 11 carries the post-translational modification Phosphoserine. Residues histidine 172 and lysine 602 contribute to the active site.

The protein belongs to the PEPCase type 1 family. Homotetramer. It depends on Mg(2+) as a cofactor.

It localises to the cytoplasm. The catalysed reaction is oxaloacetate + phosphate = phosphoenolpyruvate + hydrogencarbonate. Its activity is regulated as follows. By light-reversible phosphorylation. Through the carboxylation of phosphoenolpyruvate (PEP) it forms oxaloacetate, a four-carbon dicarboxylic acid source for the tricarboxylic acid cycle. The polypeptide is Phosphoenolpyruvate carboxylase (Phaseolus vulgaris (Kidney bean)).